A 657-amino-acid polypeptide reads, in one-letter code: Conserved oligomeric Golgi complex subunit 6 (657 aa).

Low complexity predominate over residues 14–26 (SGAANGLSNGAGA). A disordered region spans residues 14-36 (SGAANGLSNGAGATPAQPNNPLS).

The protein belongs to the COG6 family. As to quaternary structure, component of the conserved oligomeric Golgi complex which is composed of eight different subunits and is required for normal Golgi morphology and localization.

Its subcellular location is the golgi apparatus membrane. Functionally, required for normal Golgi function. In Rattus norvegicus (Rat), this protein is Conserved oligomeric Golgi complex subunit 6 (Cog6).